A 58-amino-acid polypeptide reads, in one-letter code: Sperm protamine P1 (58 aa).

The disordered stretch occupies residues 1 to 58 (MARYRRRSRSRSRSRYGRRRRRSRSRRRRSRRRRRRRGRRGRGYHRRSPHRRRRRRRR).

The protein belongs to the protamine P1 family. Testis.

It is found in the nucleus. The protein localises to the chromosome. Protamines substitute for histones in the chromatin of sperm during the haploid phase of spermatogenesis. They compact sperm DNA into a highly condensed, stable and inactive complex. The chain is Sperm protamine P1 (PRM1) from Monodelphis domestica (Gray short-tailed opossum).